The primary structure comprises 485 residues: Packaging protein UL32 (485 aa).

8 residues coordinate Zn(2+): Cys73, Cys76, His149, Cys155, Cys287, Cys290, His384, and Cys391. Zinc finger regions lie at residues 73–155 (CNIC…INRC) and 287–391 (CLLC…DPLC).

This sequence belongs to the herpesviridae UL32 protein family.

It localises to the host cytoplasm. Its subcellular location is the host nucleus. Its function is as follows. Plays a role in efficient localization of neo-synthesized capsids to nuclear replication compartments, thereby controlling cleavage and packaging of virus genomic DNA. The sequence is that of Packaging protein UL32 (U36) from Human herpesvirus 7 (strain JI) (HHV-7).